A 327-amino-acid polypeptide reads, in one-letter code: Undecaprenyl-phosphate 4-deoxy-4-formamido-L-arabinose transferase (327 aa).

The Cytoplasmic portion of the chain corresponds to 1 to 235; it reads MFDAAPIKKV…TCLTTTPLRL (235 aa). A helical transmembrane segment spans residues 236–256; it reads LSLLGSVIAIGGFSLSVLLIV. Residues 257–269 lie on the Periplasmic side of the membrane; sequence LRLALGPQWAAEG. A helical membrane pass occupies residues 270–290; that stretch reads VFMLFAVLFTFIGAQFIGMGL. Over 291-327 the chain is Cytoplasmic; it reads LGEYIGRIYNDVRARPRYFVQQVIYPESTSFTEESHQ.

The protein belongs to the glycosyltransferase 2 family.

Its subcellular location is the cell inner membrane. The catalysed reaction is UDP-4-deoxy-4-formamido-beta-L-arabinose + di-trans,octa-cis-undecaprenyl phosphate = 4-deoxy-4-formamido-alpha-L-arabinopyranosyl di-trans,octa-cis-undecaprenyl phosphate + UDP. The protein operates within glycolipid biosynthesis; 4-amino-4-deoxy-alpha-L-arabinose undecaprenyl phosphate biosynthesis; 4-amino-4-deoxy-alpha-L-arabinose undecaprenyl phosphate from UDP-4-deoxy-4-formamido-beta-L-arabinose and undecaprenyl phosphate: step 1/2. It participates in bacterial outer membrane biogenesis; lipopolysaccharide biosynthesis. In terms of biological role, catalyzes the transfer of 4-deoxy-4-formamido-L-arabinose from UDP to undecaprenyl phosphate. The modified arabinose is attached to lipid A and is required for resistance to polymyxin and cationic antimicrobial peptides. In Salmonella paratyphi A (strain ATCC 9150 / SARB42), this protein is Undecaprenyl-phosphate 4-deoxy-4-formamido-L-arabinose transferase.